The sequence spans 115 residues: Large ribosomal subunit protein bL19 (115 aa).

This sequence belongs to the bacterial ribosomal protein bL19 family.

Its function is as follows. This protein is located at the 30S-50S ribosomal subunit interface and may play a role in the structure and function of the aminoacyl-tRNA binding site. In Thermosipho melanesiensis (strain DSM 12029 / CIP 104789 / BI429), this protein is Large ribosomal subunit protein bL19.